Here is a 103-residue protein sequence, read N- to C-terminus: N(4)-acetylcytidine amidohydrolase (103 aa).

Residues 6-101 (ITFSQRFQDD…QTQFYVIEFK (96 aa)) form the ASCH domain. Catalysis depends on Lys-21, which acts as the Proton acceptor. Thr-24 (nucleophile) is an active-site residue. Glu-74 acts as the Proton donor in catalysis.

This sequence belongs to the N(4)-acetylcytidine amidohydrolase family.

It carries out the reaction N(4)-acetylcytidine + H2O = cytidine + acetate + H(+). The enzyme catalyses N(4)-acetyl-2'-deoxycytidine + H2O = 2'-deoxycytidine + acetate + H(+). The catalysed reaction is N(4)-acetylcytosine + H2O = cytosine + acetate + H(+). Its function is as follows. Catalyzes the hydrolysis of N(4)-acetylcytidine (ac4C). In Shigella boydii serotype 4 (strain Sb227), this protein is N(4)-acetylcytidine amidohydrolase (yqfB).